A 269-amino-acid chain; its full sequence is Mitochondrial scaffolding protein 1 (269 aa).

Positions 49–121 (VVEIEKTSKG…HDEAVEVFRS (73 aa)) constitute a PDZ domain. The segment at 143-185 (RTQTPTASVSITPQVTPQTRSTQNNTDTPKSMSHSESKSRLTS) is disordered. Positions 145 to 174 (QTPTASVSITPQVTPQTRSTQNNTDTPKSM) are enriched in polar residues. The helical transmembrane segment at 240–262 (WLTEALYVSIGLGALTISGYLAY) threads the bilayer.

It is found in the membrane. Functionally, plays a role in the regulation of lifespan in a partially daf-16-mediated manner, and may be involved in regulating the levels of reactive oxygen species production in response to heat stress. The chain is Mitochondrial scaffolding protein 1 from Caenorhabditis elegans.